The following is a 104-amino-acid chain: Large ribosomal subunit protein uL24 (104 aa).

Belongs to the universal ribosomal protein uL24 family. Part of the 50S ribosomal subunit.

One of two assembly initiator proteins, it binds directly to the 5'-end of the 23S rRNA, where it nucleates assembly of the 50S subunit. Functionally, one of the proteins that surrounds the polypeptide exit tunnel on the outside of the subunit. The sequence is that of Large ribosomal subunit protein uL24 from Brevibacillus brevis (strain 47 / JCM 6285 / NBRC 100599).